The sequence spans 404 residues: Cysteine desulfurase IscS (404 aa).

Pyridoxal 5'-phosphate-binding positions include 75–76, asparagine 155, glutamine 183, and 203–205; these read AT and TGH. At lysine 206 the chain carries N6-(pyridoxal phosphate)lysine. A pyridoxal 5'-phosphate-binding site is contributed by threonine 243. Catalysis depends on cysteine 328, which acts as the Cysteine persulfide intermediate. Cysteine 328 serves as a coordination point for [2Fe-2S] cluster.

It belongs to the class-V pyridoxal-phosphate-dependent aminotransferase family. NifS/IscS subfamily. As to quaternary structure, homodimer. Forms a heterotetramer with IscU, interacts with other sulfur acceptors. Pyridoxal 5'-phosphate is required as a cofactor.

The protein localises to the cytoplasm. The catalysed reaction is (sulfur carrier)-H + L-cysteine = (sulfur carrier)-SH + L-alanine. Its pathway is cofactor biosynthesis; iron-sulfur cluster biosynthesis. Functionally, master enzyme that delivers sulfur to a number of partners involved in Fe-S cluster assembly, tRNA modification or cofactor biosynthesis. Catalyzes the removal of elemental sulfur atoms from cysteine to produce alanine. Functions as a sulfur delivery protein for Fe-S cluster synthesis onto IscU, an Fe-S scaffold assembly protein, as well as other S acceptor proteins. The protein is Cysteine desulfurase IscS of Cronobacter sakazakii (strain ATCC BAA-894) (Enterobacter sakazakii).